Reading from the N-terminus, the 695-residue chain is Parasporal crystal protein Cry18Ca (695 aa).

The protein belongs to the delta endotoxin family.

In terms of biological role, binds to the brush border membrane vesicles of scarab larvae and damages the gut wall somehow to allow the vegetative cells of P.popilliae to enter the hemolymph. The polypeptide is Parasporal crystal protein Cry18Ca (cry18Ca) (Paenibacillus popilliae (Bacillus popilliae)).